We begin with the raw amino-acid sequence, 174 residues long: Calcineurin subunit B (174 aa).

4 EF-hand domains span residues 21–56 (EEIE…SSNP), 60–88 (RLMD…FSGK), 90–125 (SKLD…MVGK), and 131–166 (ELQQ…KSVA). Ca(2+)-binding residues include Asp-34, Asp-36, Ser-38, Thr-40, Glu-45, Asp-66, Asp-68, Asn-70, Thr-72, Glu-77, Asp-103, Asp-105, Asp-107, Tyr-109, Glu-114, Asp-144, Asp-146, Asp-148, Arg-150, and Glu-155.

It belongs to the calcineurin regulatory subunit family. In terms of assembly, composed of a catalytic subunit (A) and a regulatory subunit (B).

Regulatory subunit of calcineurin, a calcium-dependent, calmodulin stimulated protein phosphatase. Confers calcium sensitivity. The sequence is that of Calcineurin subunit B (CNB1) from Debaryomyces hansenii (strain ATCC 36239 / CBS 767 / BCRC 21394 / JCM 1990 / NBRC 0083 / IGC 2968) (Yeast).